Here is an 840-residue protein sequence, read N- to C-terminus: MEADPAPSSTPPPSSPAPAASPSRHPPGEEGGGAERVEVEEYVDPPSPDCCGGADPDHAPPPSPKGEEPVVSAEEEQAAVAGGEGEALRSFLEEFGDQGDDSLVPSPKLKQINTPDRLAALRFLGGKYNSLLERYKQQVAKCAEECAPRYDGLKKKYADECAERRRLYNELIELRGNIRVFCRCRPLSTAEISNGCSSIVQIDPSHETELQFVPSDKDRKAFKFDHVFGPSDNQETVFAESLPVVRSVMDGFNVCIFAYGQTGTGKTFTMEGIPEDRGVNYRALEELFRLSEERSSSVAYTFAVSILEVYNEKIRDLLDESSEQTGRKLDIKQTADGTQEVAGLIEAPIYTIDGVWEKLKVGAKNRSVGATSANELSSRSHSLVKVTVRSEHLVTGQKWRSHIWLVDLAGSERVNKTEVEGDRLKESQFINKSLSALGDVISALASKNAHIPYRNSKLTHLLQSSLGGDCKTLMFVQISPSSADSGETLCSLNFASRVRAIDHGPARKQADPAETFKLKQMTEKIRHEEKENAKLLESLQLTQLKYASRENVIKTLQEKIREAEQTSKTYQQRVRELENELANEKKAARDTARSTKPPLAPMRQRPPLGRIGNHIPPKAPLRLRLSKAPTIQNKENIPVMLNKGSSGADTSKAVAGKARRVSLTPVIRHIPLQPKRRSSLAVLPTQREQLSIFPDKRSVSRLSHIQMPRRSIATFNSIPATPLAAAAHKQVDGTPEARQLRRIEFSSSKFRSPPALARFNSRNNALSPQQKLRLASGSGNASKICFSVQKRVILGSPAPVKSSLLSGTGIFNPALREKMMAAKIGNAQRVFNTNRRKSVL.

A disordered region spans residues 1 to 74 (MEADPAPSST…KGEEPVVSAE (74 aa)). The 325-residue stretch at 177–501 (NIRVFCRCRP…LNFASRVRAI (325 aa)) folds into the Kinesin motor domain. Residue 260-267 (GQTGTGKT) coordinates ATP. Residues 517–594 (KLKQMTEKIR…KKAARDTARS (78 aa)) adopt a coiled-coil conformation. A compositionally biased stretch (basic and acidic residues) spans 581–593 (LANEKKAARDTAR). Residues 581–617 (LANEKKAARDTARSTKPPLAPMRQRPPLGRIGNHIPP) form a disordered region.

Belongs to the TRAFAC class myosin-kinesin ATPase superfamily. Kinesin family. KIN-14 subfamily.

In Oryza sativa subsp. japonica (Rice), this protein is Kinesin-like protein KIN-14J.